We begin with the raw amino-acid sequence, 386 residues long: Lipid-A-disaccharide synthase (386 aa).

The protein belongs to the LpxB family.

The enzyme catalyses a lipid X + a UDP-2-N,3-O-bis[(3R)-3-hydroxyacyl]-alpha-D-glucosamine = a lipid A disaccharide + UDP + H(+). It participates in bacterial outer membrane biogenesis; LPS lipid A biosynthesis. Its function is as follows. Condensation of UDP-2,3-diacylglucosamine and 2,3-diacylglucosamine-1-phosphate to form lipid A disaccharide, a precursor of lipid A, a phosphorylated glycolipid that anchors the lipopolysaccharide to the outer membrane of the cell. The sequence is that of Lipid-A-disaccharide synthase from Chromohalobacter salexigens (strain ATCC BAA-138 / DSM 3043 / CIP 106854 / NCIMB 13768 / 1H11).